A 35-amino-acid polypeptide reads, in one-letter code: Kappa-theraphotoxin-Tb1b (35 aa).

3 disulfide bridges follow: Cys-3/Cys-18, Cys-10/Cys-23, and Cys-17/Cys-30.

This sequence belongs to the neurotoxin 10 (Hwtx-1) family. 58 subfamily. Monomer. Expressed by the venom gland.

Its subcellular location is the secreted. Its function is as follows. Low-affinity blocker of Kv4.2/KCND2 voltage-gated potassium channels. Is presumed to shift the voltage-dependence of channel activation to more depolarized potentials and to bind to the S3-S4 linker region of the voltage sensor domain. The sequence is that of Kappa-theraphotoxin-Tb1b from Theraphosa blondi (Goliath birdeating spider).